The primary structure comprises 802 residues: Lon protease (802 aa).

A Lon N-terminal domain is found at 17–209; that stretch reads LPILPLNNVV…QVLSFLERER (193 aa). Residue 363-370 coordinates ATP; sequence GPPGVGKT. Residues 599–780 form the Lon proteolytic domain; that stretch reads EDEVGVVTGL…DEVLPRVLHP (182 aa). Catalysis depends on residues Ser-686 and Lys-729.

This sequence belongs to the peptidase S16 family. As to quaternary structure, homohexamer. Organized in a ring with a central cavity.

Its subcellular location is the cytoplasm. The enzyme catalyses Hydrolysis of proteins in presence of ATP.. In terms of biological role, ATP-dependent serine protease that mediates the selective degradation of mutant and abnormal proteins as well as certain short-lived regulatory proteins. Required for cellular homeostasis and for survival from DNA damage and developmental changes induced by stress. Degrades polypeptides processively to yield small peptide fragments that are 5 to 10 amino acids long. Binds to DNA in a double-stranded, site-specific manner. This Roseiflexus castenholzii (strain DSM 13941 / HLO8) protein is Lon protease.